Reading from the N-terminus, the 681-residue chain is Oligopeptidase A (681 aa).

His-470 provides a ligand contact to Zn(2+). The active site involves Glu-471. His-474 and His-477 together coordinate Zn(2+).

It belongs to the peptidase M3 family. The cofactor is Zn(2+).

The enzyme catalyses Hydrolysis of oligopeptides, with broad specificity. Gly or Ala commonly occur as P1 or P1' residues, but more distant residues are also important, as is shown by the fact that Z-Gly-Pro-Gly-|-Gly-Pro-Ala is cleaved, but not Z-(Gly)(5).. Functionally, may play a specific role in the degradation of signal peptides after they are released from precursor forms of secreted proteins. Can cleave N-acetyl-L-Ala(4). The sequence is that of Oligopeptidase A (prlC) from Haemophilus influenzae (strain ATCC 51907 / DSM 11121 / KW20 / Rd).